Here is an 86-residue protein sequence, read N- to C-terminus: Cell division topological specificity factor (86 aa).

The protein belongs to the MinE family.

Its function is as follows. Prevents the cell division inhibition by proteins MinC and MinD at internal division sites while permitting inhibition at polar sites. This ensures cell division at the proper site by restricting the formation of a division septum at the midpoint of the long axis of the cell. The polypeptide is Cell division topological specificity factor (Stenotrophomonas maltophilia (strain R551-3)).